The chain runs to 490 residues: Dual specificity protein kinase CLK3 (490 aa).

Residue Y7 is modified to Phosphotyrosine. 6 positions are modified to phosphoserine: S9, S49, S51, S67, S76, and S78. The interval 22-138 is disordered; it reads RRRSYSREHE…SKRSSRSVED (117 aa). Composition is skewed to basic and acidic residues over residues 26-56 and 63-76; these read YSRE…DRLP and EHRD…EDRS. A compositionally biased stretch (basic residues) spans 103-116; it reads TRKHAHHCHKRRTR. Over residues 117–130 the composition is skewed to low complexity; the sequence is SCSSASSRSQQSSK. S135 bears the Phosphoserine mark. The 317-residue stretch at 156–472 folds into the Protein kinase domain; it reads YEIVGNLGEG…LAEALLHPFF (317 aa). ATP contacts are provided by residues 162 to 170 and K186; that span reads LGEGTFGKV. D283 (proton acceptor) is an active-site residue.

It belongs to the protein kinase superfamily. CMGC Ser/Thr protein kinase family. Lammer subfamily. Autophosphorylates on all three types of residues.

Its subcellular location is the nucleus. The protein resides in the cytoplasm. It is found in the cytoplasmic vesicle. It localises to the secretory vesicle. The protein localises to the acrosome. The enzyme catalyses L-seryl-[protein] + ATP = O-phospho-L-seryl-[protein] + ADP + H(+). It catalyses the reaction L-threonyl-[protein] + ATP = O-phospho-L-threonyl-[protein] + ADP + H(+). The catalysed reaction is L-tyrosyl-[protein] + ATP = O-phospho-L-tyrosyl-[protein] + ADP + H(+). Leucettine L41 inhibits its kinase activity and affects the regulation of alternative splicing mediated by phosphorylation of SR proteins. Its function is as follows. Dual specificity kinase acting on both serine/threonine and tyrosine-containing substrates. Phosphorylates serine- and arginine-rich (SR) proteins of the spliceosomal complex. May be a constituent of a network of regulatory mechanisms that enable SR proteins to control RNA splicing and can cause redistribution of SR proteins from speckles to a diffuse nucleoplasmic distribution. Phosphorylates SRSF1 and SRSF3. Regulates the alternative splicing of tissue factor (F3) pre-mRNA in endothelial cells. This chain is Dual specificity protein kinase CLK3 (CLK3), found in Bos taurus (Bovine).